Consider the following 208-residue polypeptide: Uracil phosphoribosyltransferase (208 aa).

Residues Arg78, Arg103, and 130-138 (DPMLATGGS) each bind 5-phospho-alpha-D-ribose 1-diphosphate. Residues Ile193 and 198–200 (GDA) each bind uracil. 5-phospho-alpha-D-ribose 1-diphosphate is bound at residue Asp199.

This sequence belongs to the UPRTase family. Mg(2+) serves as cofactor.

The enzyme catalyses UMP + diphosphate = 5-phospho-alpha-D-ribose 1-diphosphate + uracil. It participates in pyrimidine metabolism; UMP biosynthesis via salvage pathway; UMP from uracil: step 1/1. With respect to regulation, allosterically activated by GTP. Catalyzes the conversion of uracil and 5-phospho-alpha-D-ribose 1-diphosphate (PRPP) to UMP and diphosphate. The protein is Uracil phosphoribosyltransferase of Shewanella piezotolerans (strain WP3 / JCM 13877).